Consider the following 299-residue polypeptide: tRNA dimethylallyltransferase (299 aa).

Gly-13–Thr-20 contributes to the ATP binding site. Substrate is bound at residue Thr-15–Thr-20. Residues Asp-38–Gln-41 form an interaction with substrate tRNA region.

This sequence belongs to the IPP transferase family. Monomer. Requires Mg(2+) as cofactor.

It catalyses the reaction adenosine(37) in tRNA + dimethylallyl diphosphate = N(6)-dimethylallyladenosine(37) in tRNA + diphosphate. Catalyzes the transfer of a dimethylallyl group onto the adenine at position 37 in tRNAs that read codons beginning with uridine, leading to the formation of N6-(dimethylallyl)adenosine (i(6)A). This is tRNA dimethylallyltransferase from Prochlorococcus marinus (strain MIT 9211).